Reading from the N-terminus, the 533-residue chain is MAVSSSTSTCSSFSLLLLLLLLAAAPWRSGEAAAAAARALNFTRQDFPGEFVFGAGTSAYQYEGATDEDGRSPSIWDTFTHAGKMPDKSTGDMGAGGYHKYKEDVKLMSDTSLEAYRFSISWSRLIPRGRGPVNPKGLEYYNSLIDELVERGIEIHVTLYHLDFPQILEDEYHGWLSPRVIDDFTAYADVCFREFGDRVRHWTTMDEPNVLSIAAYDSGAFPPCRCSPPFGANCTAGNSTVEPYVVAHNSILAHASVTRLYRDKYQATQEGFVGMNIYSFWNYPFSSSSADIAATQRALDFMVGWILDPLVYGDYPEIMKKKAGSRIPSFTEEQSELIRGSADFIGINHYTSVYISDASNGETVGPRDYSADMAATFRISRNDTPSGQFVPTRLPRDPKGLQCMLEYLRDTYQGIPVYIQENGFGHFGKDDDSLNDTDRVDYLSSYMGSTLAALRNGANVKGYFVWSFLDVFELLAGYHSPFGLHYVDFEDPNLPRQPKLSAHWYSKFLRGEIGINIESTISPDEHEHEHADQ.

An N-terminal signal peptide occupies residues 1–24; it reads MAVSSSTSTCSSFSLLLLLLLLAA. The N-linked (GlcNAc...) asparagine glycan is linked to Asn41. A beta-D-glucoside is bound by residues Gln61, His161, and 206–207; that span reads DE. Glu207 (proton donor) is an active-site residue. Cys226 and Cys234 are disulfide-bonded. Residues Asn233 and Asn238 are each glycosylated (N-linked (GlcNAc...) asparagine). A beta-D-glucoside is bound by residues Tyr350 and Glu421. Glu421 functions as the Nucleophile in the catalytic mechanism. Asn435 carries an N-linked (GlcNAc...) asparagine glycan. A beta-D-glucoside-binding residues include Trp466 and Phe482.

It belongs to the glycosyl hydrolase 1 family.

The catalysed reaction is Hydrolysis of terminal, non-reducing beta-D-glucosyl residues with release of beta-D-glucose.. The chain is Beta-glucosidase 22 (BGLU22) from Oryza sativa subsp. japonica (Rice).